The sequence spans 404 residues: Sorting nexin-5 (404 aa).

Alanine 2 carries the post-translational modification N-acetylalanine. Residues 25-172 (LNVDPSLQID…HVFLEYDQDL (148 aa)) enclose the PX domain. A 1,2-diacyl-sn-glycero-3-phospho-(1D-myo-inositol-4,5-bisphosphate) contacts are provided by residues 40 to 46 (SERDKVK), 99 to 105 (FDGPREK), and 113 to 116 (EGSM). Positions 169 to 261 (DQDLSVRRKN…HSLALEEPTV (93 aa)) are interaction with DOCK1. The membrane-binding amphipathic helix stretch occupies residues 183–200 (FGGFFKSVVKSADEVLFS). Phosphoserine is present on serine 193. The BAR domain occupies 202–404 (VKEVDDFFEQ…QSCIDLFKNN (203 aa)). Lysine 275 carries the post-translational modification N6-acetyllysine.

The protein belongs to the sorting nexin family. In terms of assembly, forms heterodimers with BAR domain-containing sorting nexins SNX1 and SNX2; does not homodimerize. The heterodimers are proposed to self-assemble into helical arrays on the membrane to stabilize and expand local membrane curvature underlying endosomal tubule formation. Thought to be a component of the originally described retromer complex (also called SNX-BAR retromer) which is a pentamer containing the heterotrimeric retromer cargo-selective complex (CSC), also described as vacuolar protein sorting subcomplex (VPS), and a heterodimeric membrane-deforming subcomplex formed between SNX1 or SNX2 and SNX5 or SNX6 (also called SNX-BAR subcomplex); the respective CSC and SNX-BAR subcomplexes associate with low affinity. Interacts with SNX1, SNX2, VPS26A, VPS29, VPS35, DCTN1, DOCK1, MIB1, PIP5K1C. Interacts with HGS; increased by PIP5K1C kinase activity and by PtdIns(3P) and/or PtdIns(3,4)P2. Detected in macrophages (at protein level).

The protein localises to the endosome. The protein resides in the early endosome. It is found in the early endosome membrane. It localises to the cell membrane. Its subcellular location is the cytoplasmic vesicle membrane. The protein localises to the cytoplasm. The protein resides in the cell projection. It is found in the phagocytic cup. It localises to the ruffle. Involved in several stages of intracellular trafficking. Interacts with membranes containing phosphatidylinositol lipids. Acts in part as component of the retromer membrane-deforming SNX-BAR subcomplex. The SNX-BAR retromer mediates retrograde transport of cargo proteins from endosomes to the trans-Golgi network (TGN) and is involved in endosome-to-plasma membrane transport for cargo protein recycling. The SNX-BAR subcomplex functions to deform the donor membrane into a tubular profile called endosome-to-TGN transport carrier (ETC). Does not have in vitro vesicle-to-membrane remodeling activity. Involved in retrograde transport of lysosomal enzyme receptor IGF2R. May function as link between endosomal transport vesicles and dynactin. Plays a role in the internalization of EGFR after EGF stimulation. Involved in EGFR endosomal sorting and degradation; the function involves PIP5K1C and is retromer-independent. Together with PIP5K1C facilitates HGS interaction with ubiquitinated EGFR, which initiates EGFR sorting to intraluminal vesicles (ILVs) of the multivesicular body for subsequent lysosomal degradation. Involved in E-cadherin sorting and degradation; inhibits PIP5K1C-mediated E-cadherin degradation. Plays a role in macropinocytosis. This is Sorting nexin-5 (Snx5) from Mus musculus (Mouse).